We begin with the raw amino-acid sequence, 479 residues long: Glutamyl-tRNA reductase (479 aa).

Substrate-binding positions include 48–51 (TCNR), S104, 109–111 (ERQ), and Q115. Catalysis depends on C49, which acts as the Nucleophile. Position 189–194 (189–194 (GAGKMG)) interacts with NADP(+). Residues 417–455 (DAGRSLAEAPDADTPDLGEAPSRCPYMTHDPGGDGTETE) are disordered.

This sequence belongs to the glutamyl-tRNA reductase family. As to quaternary structure, homodimer.

It catalyses the reaction (S)-4-amino-5-oxopentanoate + tRNA(Glu) + NADP(+) = L-glutamyl-tRNA(Glu) + NADPH + H(+). It functions in the pathway porphyrin-containing compound metabolism; protoporphyrin-IX biosynthesis; 5-aminolevulinate from L-glutamyl-tRNA(Glu): step 1/2. In terms of biological role, catalyzes the NADPH-dependent reduction of glutamyl-tRNA(Glu) to glutamate 1-semialdehyde (GSA). The polypeptide is Glutamyl-tRNA reductase (Salinibacter ruber (strain DSM 13855 / M31)).